The primary structure comprises 130 residues: MFVMVLRIILLALFAYCIYAVVKYVANPKRRLKLAQSKEHFYIIDEQNNTRKNFQLTYKGVLFEGEKHIPSKDHPLFIHTIFVWTESPEKLKHFSAKDFENIEEKVLERYPNCKIDWDQPIKLAKKAEER.

The helical transmembrane segment at 2-22 (FVMVLRIILLALFAYCIYAVV) threads the bilayer.

It localises to the membrane. In terms of biological role, may mediate a negative feedback loop that down-regulates the expression of the sigma-W regulon following the activation of sigma-W in response to conditions of cell envelope stress. Might interact with and inhibit the activity of the protease PrsW, or could bind to the anti-sigma-W factor RsiW and thereby protect it from PrsW-mediated cleavage. This is Sigma-w pathway protein YsdB (ysdB) from Bacillus subtilis (strain 168).